The chain runs to 379 residues: Nitric oxide reductase FlRd-NAD(+) reductase (379 aa).

The protein belongs to the FAD-dependent oxidoreductase family. The cofactor is FAD.

Its subcellular location is the cytoplasm. The catalysed reaction is 2 reduced [nitric oxide reductase rubredoxin domain] + NAD(+) + H(+) = 2 oxidized [nitric oxide reductase rubredoxin domain] + NADH. The protein operates within nitrogen metabolism; nitric oxide reduction. One of at least two accessory proteins for anaerobic nitric oxide (NO) reductase. Reduces the rubredoxin moiety of NO reductase. In Pectobacterium atrosepticum (strain SCRI 1043 / ATCC BAA-672) (Erwinia carotovora subsp. atroseptica), this protein is Nitric oxide reductase FlRd-NAD(+) reductase.